The chain runs to 291 residues: Bifunctional protein FolD 1 (291 aa).

NADP(+)-binding positions include 167–169 (GAS), isoleucine 192, and isoleucine 233.

Belongs to the tetrahydrofolate dehydrogenase/cyclohydrolase family. As to quaternary structure, homodimer.

It catalyses the reaction (6R)-5,10-methylene-5,6,7,8-tetrahydrofolate + NADP(+) = (6R)-5,10-methenyltetrahydrofolate + NADPH. The enzyme catalyses (6R)-5,10-methenyltetrahydrofolate + H2O = (6R)-10-formyltetrahydrofolate + H(+). It participates in one-carbon metabolism; tetrahydrofolate interconversion. Functionally, catalyzes the oxidation of 5,10-methylenetetrahydrofolate to 5,10-methenyltetrahydrofolate and then the hydrolysis of 5,10-methenyltetrahydrofolate to 10-formyltetrahydrofolate. The sequence is that of Bifunctional protein FolD 1 from Pseudomonas putida (strain ATCC 47054 / DSM 6125 / CFBP 8728 / NCIMB 11950 / KT2440).